The chain runs to 362 residues: Formate dehydrogenase (362 aa).

Residues V93 and N119 each contribute to the substrate site. NAD(+) contacts are provided by residues 174–175, D195, 230–234, T256, D282, 311–314, and S357; these read RI, PLHAG, and HYSG.

Belongs to the D-isomer specific 2-hydroxyacid dehydrogenase family. FDH subfamily. In terms of assembly, homodimer.

It is found in the cytoplasm. The catalysed reaction is formate + NAD(+) = CO2 + NADH. In terms of biological role, catalyzes the NAD(+)-dependent oxidation of formate to carbon dioxide. Formate oxidation is the final step in the methanol oxidation pathway in methylotrophic microorganisms. Has a role in the detoxification of exogenous formate in non-methylotrophic organisms. The protein is Formate dehydrogenase of Pichia angusta (Yeast).